Consider the following 160-residue polypeptide: Cytochrome b6-f complex subunit 4 (160 aa).

3 helical membrane passes run 36 to 56, 95 to 115, and 131 to 151; these read LLYIFPVVILGTIACTVGLAV, LLGVLLMAAVPAGLLTVPFLE, and TVFLIGTVVSIWLGIGAALPI.

Belongs to the cytochrome b family. PetD subfamily. The 4 large subunits of the cytochrome b6-f complex are cytochrome b6, subunit IV (17 kDa polypeptide, petD), cytochrome f and the Rieske protein, while the 4 small subunits are petG, petL, petM and petN. The complex functions as a dimer.

It is found in the plastid. Its subcellular location is the chloroplast thylakoid membrane. In terms of biological role, component of the cytochrome b6-f complex, which mediates electron transfer between photosystem II (PSII) and photosystem I (PSI), cyclic electron flow around PSI, and state transitions. The protein is Cytochrome b6-f complex subunit 4 of Physcomitrium patens (Spreading-leaved earth moss).